The following is a 181-amino-acid chain: FMN reductase (NADH) RutF (181 aa).

It belongs to the non-flavoprotein flavin reductase family. RutF subfamily.

The enzyme catalyses FMNH2 + NAD(+) = FMN + NADH + 2 H(+). Functionally, catalyzes the reduction of FMN to FMNH2 which is used to reduce pyrimidine by RutA via the Rut pathway. In Ancylobacter novellus (strain ATCC 8093 / DSM 506 / JCM 20403 / CCM 1077 / IAM 12100 / NBRC 12443 / NCIMB 10456) (Starkeya novella), this protein is FMN reductase (NADH) RutF.